The sequence spans 347 residues: tRNA pseudouridine synthase D (347 aa).

The active-site Nucleophile is Asp78. A TRUD domain is found at 150-304 (GLPNFFGPQR…AEGTRRAARL (155 aa)).

This sequence belongs to the pseudouridine synthase TruD family.

It carries out the reaction uridine(13) in tRNA = pseudouridine(13) in tRNA. Functionally, responsible for synthesis of pseudouridine from uracil-13 in transfer RNAs. The sequence is that of tRNA pseudouridine synthase D from Anaeromyxobacter dehalogenans (strain 2CP-C).